Here is a 209-residue protein sequence, read N- to C-terminus: Uracil phosphoribosyltransferase (209 aa).

Residues Arg-79, Arg-104, and 131–139 each bind 5-phospho-alpha-D-ribose 1-diphosphate; that span reads DPMLATGGS. Uracil contacts are provided by residues Ile-194 and 199–201; that span reads GDA. Asp-200 lines the 5-phospho-alpha-D-ribose 1-diphosphate pocket.

The protein belongs to the UPRTase family. Mg(2+) serves as cofactor.

It catalyses the reaction UMP + diphosphate = 5-phospho-alpha-D-ribose 1-diphosphate + uracil. It participates in pyrimidine metabolism; UMP biosynthesis via salvage pathway; UMP from uracil: step 1/1. Allosterically activated by GTP. Its function is as follows. Catalyzes the conversion of uracil and 5-phospho-alpha-D-ribose 1-diphosphate (PRPP) to UMP and diphosphate. The protein is Uracil phosphoribosyltransferase of Streptococcus mutans serotype c (strain ATCC 700610 / UA159).